The chain runs to 506 residues: FAD-linked oxidoreductase aurO (506 aa).

The FAD-binding PCMH-type domain occupies 92–260 (ITAQPLAICR…AETDVRVYPM (169 aa)).

The protein belongs to the oxygen-dependent FAD-linked oxidoreductase family. As to quaternary structure, might be part of an extracellular enzyme complex composed of GIP1, aurF, aurO and aurS. It depends on FAD as a cofactor.

The protein resides in the secreted. Its subcellular location is the extracellular space. Its pathway is pigment biosynthesis. In terms of biological role, FAD-linked oxidoreductase; part of the gene cluster that mediates the biosynthesis of aurofusarin, a red mycelium pigment which is acting as a mycotoxin. The first step is performed by the polyketide synthase which condenses one acetyl-CoA and 6 malonyl-CoA units to form the first intermediate, the cyclic heptaketide and yellow pigment YWA1. The C2 hydroxyl group in the pyrone ring of YWA1 is probably formed during ring closure by an aldol-type cyclization reaction. The dehydratase aurZ then acts as the first tailoring enzyme in the aurofusarin biosynthetic pathway by converting YWA1 to nor-rubrofusarin. Nor-rubrofusarin is then methylated to rubrofusarin by the O-methyltransferase aurJ. Rubrofusarin is then transported across the plasma membrane by the rubrofusarin-specific pump aurT for further enzymatic processing by the extracellular complex composed of GIP1, aurF, aurO and aurS to yield aurofusarin. This is FAD-linked oxidoreductase aurO from Gibberella zeae (strain ATCC MYA-4620 / CBS 123657 / FGSC 9075 / NRRL 31084 / PH-1) (Wheat head blight fungus).